Reading from the N-terminus, the 20-residue chain is Maximin-Hu (20 aa).

It belongs to the bombinin family. In terms of tissue distribution, expressed by the skin glands.

The protein resides in the secreted. In terms of biological role, has antimicrobial activity. In Bombina maxima (Giant fire-bellied toad), this protein is Maximin-Hu.